A 453-amino-acid polypeptide reads, in one-letter code: UDP-N-acetylmuramoylalanine--D-glutamate ligase (453 aa).

115-121 (GTNGKTT) contacts ATP.

This sequence belongs to the MurCDEF family.

Its subcellular location is the cytoplasm. The catalysed reaction is UDP-N-acetyl-alpha-D-muramoyl-L-alanine + D-glutamate + ATP = UDP-N-acetyl-alpha-D-muramoyl-L-alanyl-D-glutamate + ADP + phosphate + H(+). It participates in cell wall biogenesis; peptidoglycan biosynthesis. Functionally, cell wall formation. Catalyzes the addition of glutamate to the nucleotide precursor UDP-N-acetylmuramoyl-L-alanine (UMA). The polypeptide is UDP-N-acetylmuramoylalanine--D-glutamate ligase (Geotalea uraniireducens (strain Rf4) (Geobacter uraniireducens)).